Reading from the N-terminus, the 1963-residue chain is Myosin-4 (1963 aa).

The Myosin N-terminal SH3-like domain occupies 28–77 (DSKKNVWIPDPEEGYLAGEITATKGDQVTIVTARGNEVTLKKELVQEMNP). Residues 81–787 (EKTEDMSNLS…VLAHLEDIRD (707 aa)) form the Myosin motor domain. The residue at position 125 (K125) is an N6,N6,N6-trimethyllysine. ATP is bound at residue 174–181 (GESGAGKT). Actin-binding regions lie at residues 662–684 (LNNLMTMLNKTHPHFIRCIIPNE) and 766–780 (RIGLTKVFFKAGVLA). Residues 848–1161 (MLKAGKEAEE…LEELGEKLDE (314 aa)) are alpha-helical tailpiece (S2). Residues 848–1963 (MLKAGKEAEE…SPSRARASDF (1116 aa)) adopt a coiled-coil conformation. Basic and acidic residues-rich tracts occupy residues 970 to 988 (LRKAESEKQSKDHQIRSLQ) and 1133 to 1146 (NERQSRSKADRAKS). Disordered stretches follow at residues 970–990 (LRKAESEKQSKDHQIRSLQDE) and 1125–1146 (SELEEELENERQSRSKADRAKS). Residues 1162–1173 (QGGATAAQVEVN) form a hinge region. The light meromyosin (LMM) stretch occupies residues 1162–1963 (QGGATAAQVE…SPSRARASDF (802 aa)). 2 disordered regions span residues 1317–1336 (LTSQLEEARRTADEEARERQ) and 1912–1963 (LEDA…ASDF). The segment covering 1322–1336 (EEARRTADEEARERQ) has biased composition (basic and acidic residues).

This sequence belongs to the TRAFAC class myosin-kinesin ATPase superfamily. Myosin family. As to quaternary structure, muscle myosin is a hexameric protein that consists of 2 heavy chain subunits (MHC), 2 alkali light chain subunits (MLC) and 2 regulatory light chain subunits (MLC-2). Forms a complex composed of chaperone unc-45, unc-54 and ubiquitin-protein ligase ufd-2; promotes poly-ubiquitination of unfolded unc-54. Within the complex interacts with unc-45 (via UCS domain) and ufd-2. Interacts with itr-1 (via c-terminal coiled coil domain). In terms of processing, unfolded unc-54 is poly-ubiquitinated by ufd-2.

It is found in the cytoplasm. The protein resides in the myofibril. Its function is as follows. Required for muscle contraction. In Caenorhabditis elegans, this protein is Myosin-4 (unc-54).